Consider the following 1107-residue polypeptide: Miniconductance mechanosensitive channel MscM (1107 aa).

An N-terminal signal peptide occupies residues 1–19 (MRLIITFLMAWCLSWGAYA). Helical transmembrane passes span 467-487 (VMMLTSKETILPLFGALILVG), 522-542 (LFWSILVASPLPVLWMTLGYG), 551-571 (LAVAIGDGVTATVPLLWVVMI), 600-620 (YLMSIGLIVPLIMALMMFDNL), 628-648 (SLGRLCFILICGALAVVTLSL), 674-694 (MMIGAPLVAILASAVGYLATA), 698-718 (LARLETSVAIWFLLLVVYHVI), 785-805 (ILMLIALLSVIVLWSEIHSAF), 828-848 (PITLGAVLIAILVFIITTQLV), 875-895 (TITKYLLMLIGGLVGFSMIGI), and 910-930 (GLGFGLQEIFANFISGLIILF).

Belongs to the MscS (TC 1.A.23) family. As to quaternary structure, homoheptamer.

It localises to the cell inner membrane. Functionally, mechanosensitive channel that protects cells against hypoosmotic stress when highly overexpressed. Gates spontaneously in response to increased membrane tension. This chain is Miniconductance mechanosensitive channel MscM (mscM), found in Escherichia coli (strain K12).